Reading from the N-terminus, the 509-residue chain is Cysteine--tRNA ligase (509 aa).

Cys19 is a Zn(2+) binding site. A 'HIGH' region motif is present at residues 21-31 (PTVYNDAHIGH). Cys213, His238, and Glu242 together coordinate Zn(2+). The 'KMSKS' region motif lies at 284-288 (KMSKS). Residue Lys287 coordinates ATP.

It belongs to the class-I aminoacyl-tRNA synthetase family. Zn(2+) serves as cofactor.

The enzyme catalyses tRNA(Cys) + L-cysteine + ATP = L-cysteinyl-tRNA(Cys) + AMP + diphosphate. The polypeptide is Cysteine--tRNA ligase (CARS) (Acanthamoeba polyphaga (Amoeba)).